The primary structure comprises 123 residues: Large ribosomal subunit protein bL19 (123 aa).

The protein belongs to the bacterial ribosomal protein bL19 family.

Functionally, this protein is located at the 30S-50S ribosomal subunit interface and may play a role in the structure and function of the aminoacyl-tRNA binding site. This Bdellovibrio bacteriovorus (strain ATCC 15356 / DSM 50701 / NCIMB 9529 / HD100) protein is Large ribosomal subunit protein bL19.